The following is a 207-amino-acid chain: LexA repressor (207 aa).

The H-T-H motif DNA-binding region spans 28-48 (RAEIAQKLGFKSANAAEEHLK). Active-site for autocatalytic cleavage activity residues include Ser-124 and Lys-161.

It belongs to the peptidase S24 family. In terms of assembly, homodimer.

It carries out the reaction Hydrolysis of Ala-|-Gly bond in repressor LexA.. In terms of biological role, represses a number of genes involved in the response to DNA damage (SOS response), including recA and lexA. In the presence of single-stranded DNA, RecA interacts with LexA causing an autocatalytic cleavage which disrupts the DNA-binding part of LexA, leading to derepression of the SOS regulon and eventually DNA repair. The polypeptide is LexA repressor (Aeromonas hydrophila subsp. hydrophila (strain ATCC 7966 / DSM 30187 / BCRC 13018 / CCUG 14551 / JCM 1027 / KCTC 2358 / NCIMB 9240 / NCTC 8049)).